We begin with the raw amino-acid sequence, 67 residues long: Ferredoxin (67 aa).

2 consecutive 4Fe-4S ferredoxin-type domains span residues 3–31 (WKVS…MNDE) and 36–67 (PKVE…IEEA). Residues Cys12, Asp15, and Cys18 each coordinate [4Fe-4S] cluster. Cys22 and Cys49 are oxidised to a cystine. Cys57 is a [4Fe-4S] cluster binding site.

Homodimer. [4Fe-4S] cluster is required as a cofactor. It depends on [3Fe-4S] cluster as a cofactor.

In terms of biological role, ferredoxins are iron-sulfur proteins that transfer electrons in a wide variety of metabolic reactions. This Pyrococcus furiosus (strain ATCC 43587 / DSM 3638 / JCM 8422 / Vc1) protein is Ferredoxin (fdxA).